Here is a 996-residue protein sequence, read N- to C-terminus: RNA2 polyprotein (996 aa).

The tract at residues 363-369 is involved in tubule formation by the movement protein; the sequence is LRYTIGG. Residues 368-398 are disordered; that stretch reads GGSKPKNKLADKAHNEEAETSDSKGIIDPKD. A compositionally biased stretch (basic and acidic residues) spans 375–398; it reads KLADKAHNEEAETSDSKGIIDPKD.

Interacts with the large capsid protein. In terms of assembly, interacts with the small capsid protein. Homomultimer; assembles as pentons. Interacts with the movement protein (via C-terminus). As to quaternary structure, interacts (via C-terminus) with the large capsid protein. Specific enzymatic cleavages by picornain 3C-like protease in vivo yield mature proteins.

Its subcellular location is the host cell junction. It is found in the host plasmodesma. It localises to the virion. Its function is as follows. Responsible for viral RNA2 accumulation. May function by recruiting the RNA1-encoded polyprotein that contains the replication protein to RNA2 and enable its replication. In terms of biological role, transports the viral genome to neighboring plant cells directly through plasmosdesmata, without any budding. The movement protein allows efficient cell to cell propagation, by bypassing the host cell wall barrier. Acts by forming a tubular structure at the host plasmodesmata, enlarging it enough to allow free passage of virion capsids. Binds to GTP and to single-stranded RNA and single-stranded DNA in a non-sequence-specific manner. Together with the mature small capsid protein, forms an icosahedral capsid (T=3) enclosing the viral positive strand RNA genome, with a diameter of approximately 300 Angstroms. The capsid is formed from 60 copies each of the large and the mature small capsid protein. The large capsid protein interacts with the viral RNA. Functionally, together with the large capsid protein, forms an icosahedral capsid (T=3) enclosing the viral positive strand RNA genome, with a diameter of approximately 300 Angstroms. The capsid is formed from 60 copies each of the large and the mature small capsid protein. The mature small capsid protein forms the turrets at the fivefold axes of the viral particle. This Red clover mottle virus (RCMV) protein is RNA2 polyprotein.